Here is a 997-residue protein sequence, read N- to C-terminus: MIGSVLTKVFGTSNERVVKRLLPIVEQIGALEPEIEKLSDEQLRAKTAEFRAYIAKAVEGVDDEDEQHKAIQRALDDLMPEAFAVVREAGRRVLHMRHFDVQLIGGMVLHQGKIAEMKTGEGKTLVATLPCYLNALAGRGVHVVTVNDYLAKRDAEWMGKIYEFLGLTVGVIVHDLDDEQRRQAYAADITYGTNNEFGFDYLRDNMKFDLKDCVQRKHFYCIVDEVDSILIDEARTPLIISGPTDQTTDKYVRVNRIIPALEQGEEIEKGEEKILTGDFVVDEKHKTISVTDEGWEKIEQLLGIGNIADPENWDLKHHVETAIKAHSLYKRDVQYVVKDGEVIIVDEFTGRLMPGRRWSDGLHQSVEAKEGVNIRREDQTLATITFQNYFRLYKKLSGMTGTAETEAAEFDKIYKLEIVVIPTNRPLLRVENPDVVFRTTQEKYFAVADQIAELNKNNQPVLVGTTSIEKSELLSQILVRKGVKHVVLNAKYHEREAEIVAQAGRLGMVTIATNMAGRGTDILLGGNADFMAKQELLKKGMARSISPAEGAINPMAAQGMLRFYYQGQEFETTQENWDRVFAQHSASVAQEREQVLAAGGLYIIGTERHESRRVDNQLRGRAGRQGDPGASRFYLSLEDDLMRIFAREWVSTLLQRLGMEEGVPIESRMISNRIEKAQMAVEGQNFEARKHLLEYDDVMNKQREAVYGLRNQLLAGLDQKELIVEDYVPNILSGIFDEYAPEKQHADQWNWEEIRKKLIDHFGFDYQVDGLDVADLTRHELGEEVFSRLKERYLAKEQFIGEEPMRYHERMIMLSVLDGLWKDHLLNMDHLKEGIGLRGYGQQDPLIEYKRESFDMFEAMMNRFQEDTVRYLYLMQIVGPDGQPMQVPTRLRPADASPNGVVHAEPAPLNGSAPIPEQAAPPPPPAIPTRQPSTTIDAIEREFEKKKQQELSHARMAGGGDGSDAVNTRRVGEKVGRNDPCPCGSGKKYKKCHGAEA.

Residues Gln-102, 120–124 (GEGKT), and Asp-521 contribute to the ATP site. A disordered region spans residues 893-997 (PADASPNGVV…KYKKCHGAEA (105 aa)). The segment covering 938–953 (AIEREFEKKKQQELSH) has biased composition (basic and acidic residues). The Zn(2+) site is built by Cys-981, Cys-983, Cys-992, and His-993. Residues 987 to 997 (KKYKKCHGAEA) are compositionally biased toward basic residues.

The protein belongs to the SecA family. As to quaternary structure, monomer and homodimer. Part of the essential Sec protein translocation apparatus which comprises SecA, SecYEG and auxiliary proteins SecDF. Other proteins may also be involved. It depends on Zn(2+) as a cofactor.

Its subcellular location is the cell inner membrane. The protein resides in the cytoplasm. The catalysed reaction is ATP + H2O + cellular proteinSide 1 = ADP + phosphate + cellular proteinSide 2.. In terms of biological role, part of the Sec protein translocase complex. Interacts with the SecYEG preprotein conducting channel. Has a central role in coupling the hydrolysis of ATP to the transfer of proteins into and across the cell membrane, serving as an ATP-driven molecular motor driving the stepwise translocation of polypeptide chains across the membrane. This Acidobacterium capsulatum (strain ATCC 51196 / DSM 11244 / BCRC 80197 / JCM 7670 / NBRC 15755 / NCIMB 13165 / 161) protein is Protein translocase subunit SecA.